A 249-amino-acid chain; its full sequence is Suppressor of silencing P0 (249 aa).

One can recognise an F-box-like domain in the interval 63–67; sequence LPFHL.

It belongs to the polerovirus P0 protein family. Interacts (via F-box-like domain) with host AGO1; this interaction targets AGO1 for degradation, and thereby suppresses the silencing function of the latter. Interacts (via F-box-like domain) with host ASK1 and ASK2 (SKP proteins); these interactions are essential for viral pathogenicity. Part of a SCF P0 complex composed of P0 and the host proteins SKP and CUL1.

Functionally, suppressor of RNA-mediated gene silencing, also known as post-transcriptional gene silencing (PTGS), a mechanism of plant viral defense that limits the accumulation of viral RNAs. The P0 protein suppresses local PTGS using its F-box-like domain to mediate destabilization and degradation of the AGO1 protein. The polypeptide is Suppressor of silencing P0 (Turnip yellows virus (isolate FL-1) (TuYV)).